The following is a 350-amino-acid chain: Phosphate acyltransferase (350 aa).

This sequence belongs to the PlsX family. In terms of assembly, homodimer. Probably interacts with PlsY.

Its subcellular location is the cytoplasm. It catalyses the reaction a fatty acyl-[ACP] + phosphate = an acyl phosphate + holo-[ACP]. Its pathway is lipid metabolism; phospholipid metabolism. Catalyzes the reversible formation of acyl-phosphate (acyl-PO(4)) from acyl-[acyl-carrier-protein] (acyl-ACP). This enzyme utilizes acyl-ACP as fatty acyl donor, but not acyl-CoA. The protein is Phosphate acyltransferase of Phenylobacterium zucineum (strain HLK1).